The following is a 151-amino-acid chain: Flagellar assembly factor FliW 2 (151 aa).

It belongs to the FliW family. In terms of assembly, interacts with translational regulator CsrA and flagellin(s).

The protein resides in the cytoplasm. Its function is as follows. Acts as an anti-CsrA protein, binds CsrA and prevents it from repressing translation of its target genes, one of which is flagellin. Binds to flagellin and participates in the assembly of the flagellum. The chain is Flagellar assembly factor FliW 2 from Desulfotalea psychrophila (strain LSv54 / DSM 12343).